Consider the following 216-residue polypeptide: Guanylate kinase (216 aa).

One can recognise a Guanylate kinase-like domain in the interval 11 to 189; that stretch reads GVLIVISGPS…AVKKIEAILL (179 aa). 18-25 contacts ATP; it reads GPSGAGKG.

Belongs to the guanylate kinase family.

Its subcellular location is the cytoplasm. It carries out the reaction GMP + ATP = GDP + ADP. Functionally, essential for recycling GMP and indirectly, cGMP. This Clostridium perfringens (strain SM101 / Type A) protein is Guanylate kinase.